The primary structure comprises 251 residues: Ubiquinone/menaquinone biosynthesis C-methyltransferase UbiE (251 aa).

Residues T74, D95, 123-124 (NA), and S140 each bind S-adenosyl-L-methionine.

Belongs to the class I-like SAM-binding methyltransferase superfamily. MenG/UbiE family.

It carries out the reaction a 2-demethylmenaquinol + S-adenosyl-L-methionine = a menaquinol + S-adenosyl-L-homocysteine + H(+). The enzyme catalyses a 2-methoxy-6-(all-trans-polyprenyl)benzene-1,4-diol + S-adenosyl-L-methionine = a 5-methoxy-2-methyl-3-(all-trans-polyprenyl)benzene-1,4-diol + S-adenosyl-L-homocysteine + H(+). It functions in the pathway quinol/quinone metabolism; menaquinone biosynthesis; menaquinol from 1,4-dihydroxy-2-naphthoate: step 2/2. Its pathway is cofactor biosynthesis; ubiquinone biosynthesis. In terms of biological role, methyltransferase required for the conversion of demethylmenaquinol (DMKH2) to menaquinol (MKH2) and the conversion of 2-polyprenyl-6-methoxy-1,4-benzoquinol (DDMQH2) to 2-polyprenyl-3-methyl-6-methoxy-1,4-benzoquinol (DMQH2). The sequence is that of Ubiquinone/menaquinone biosynthesis C-methyltransferase UbiE from Cronobacter sakazakii (strain ATCC BAA-894) (Enterobacter sakazakii).